A 63-amino-acid polypeptide reads, in one-letter code: Metallothionein-like protein type 3 (63 aa).

It belongs to the metallothionein superfamily. Type 15 family.

Metallothioneins have a high content of cysteine residues that bind various heavy metals. The chain is Metallothionein-like protein type 3 from Actinidia deliciosa (Kiwi).